We begin with the raw amino-acid sequence, 400 residues long: Lysophospholipid transporter LplT (400 aa).

12 consecutive transmembrane segments (helical) span residues 19–39, 53–73, 91–111, 139–159, 164–184, 195–213, 227–247, 257–277, 281–301, 304–324, 352–372, and 373–393; these read VIVA…ATLA, VLQM…GQIA, AGAA…LVGI, LMEA…GVLA, IAAL…NLFI, SWRL…VVLW, LFWG…PVAL, YLNA…AKLV, TVSR…IFSL, ALLP…FFVV, NSAM…GVPA, and VAIG…LWIW.

This sequence belongs to the major facilitator superfamily. LplT (TC 2.A.1.42) family.

The protein resides in the cell inner membrane. Functionally, catalyzes the facilitated diffusion of 2-acyl-glycero-3-phosphoethanolamine (2-acyl-GPE) into the cell. The sequence is that of Lysophospholipid transporter LplT from Salmonella schwarzengrund (strain CVM19633).